Here is a 156-residue protein sequence, read N- to C-terminus: Small ribosomal subunit protein uS7 (156 aa).

Belongs to the universal ribosomal protein uS7 family. In terms of assembly, part of the 30S ribosomal subunit. Contacts proteins S9 and S11.

Functionally, one of the primary rRNA binding proteins, it binds directly to 16S rRNA where it nucleates assembly of the head domain of the 30S subunit. Is located at the subunit interface close to the decoding center, probably blocks exit of the E-site tRNA. The sequence is that of Small ribosomal subunit protein uS7 from Aster yellows witches'-broom phytoplasma (strain AYWB).